The following is a 1409-amino-acid chain: DNA-directed RNA polymerase subunit beta' (1409 aa).

Residues Cys70, Cys72, Cys85, and Cys88 each contribute to the Zn(2+) site. Mg(2+)-binding residues include Asp458, Asp460, and Asp462. 4 residues coordinate Zn(2+): Cys813, Cys887, Cys894, and Cys897.

The protein belongs to the RNA polymerase beta' chain family. The RNAP catalytic core consists of 2 alpha, 1 beta, 1 beta' and 1 omega subunit. When a sigma factor is associated with the core the holoenzyme is formed, which can initiate transcription. Mg(2+) serves as cofactor. Zn(2+) is required as a cofactor.

The catalysed reaction is RNA(n) + a ribonucleoside 5'-triphosphate = RNA(n+1) + diphosphate. DNA-dependent RNA polymerase catalyzes the transcription of DNA into RNA using the four ribonucleoside triphosphates as substrates. This Acidovorax ebreus (strain TPSY) (Diaphorobacter sp. (strain TPSY)) protein is DNA-directed RNA polymerase subunit beta'.